Here is an 89-residue protein sequence, read N- to C-terminus: Small ribosomal subunit protein bS20 (89 aa).

The disordered stretch occupies residues 1 to 28 (MANHYSALKRARQTETRTARNRANTSRM).

It belongs to the bacterial ribosomal protein bS20 family.

Its function is as follows. Binds directly to 16S ribosomal RNA. The polypeptide is Small ribosomal subunit protein bS20 (Koribacter versatilis (strain Ellin345)).